Here is a 368-residue protein sequence, read N- to C-terminus: MNKTITALAIMMASFAANASVLPETPVPFKSGTGAIDNDTVYIGLGSAGTAWYKLDTQAKDKKWTALAAFPGGPRDQATSAFIDGNLYVFGGIGKNSEGLTQVFNDVHKYNPKTNSWVKLMSHAPMGMAGHVTFVHNGKAYVTGGVNQNIFNGYFEDLNEAGKDSTAIDKINAHYFDKKAEDYFFNKFLLSFDPSTQQWSYAGESPWYGTAGAAVVNKGDKTWLINGEAKPGLRTDAVFELDFTGNNLKWNKLAPVSSPDGVAGGFAGISNDSLIFAGGAGFKGSRENYQNGKNYAHEGLKKSYSTDIHLWHNGKWDKSGELSQGRAYGVSLPWNNSLLIIGGETAGGKAVTDSVLITVKDNKVTVQN.

The first 19 residues, 1–19 (MNKTITALAIMMASFAANA), serve as a signal peptide directing secretion. Kelch repeat units lie at residues 40 to 84 (TVYI…AFID), 86 to 137 (NLYV…FVHN), 139 to 173 (KAYV…KINA), 174 to 219 (HYFD…VNKG), 222 to 265 (TWLI…VAGG), 287 to 336 (ENYQ…PWNN), and 338 to 367 (LLII…VTVQ). Glu-228 serves as the catalytic Proton acceptor.

As to quaternary structure, homodimer.

It is found in the periplasm. It carries out the reaction N-acetyl-alpha-neuraminate = N-acetyl-beta-neuraminate. Converts alpha-N-acetylneuranimic acid (Neu5Ac) to the beta-anomer, accelerating the equilibrium between the alpha- and beta-anomers. Probably facilitates sialidase-negative bacteria to compete successfully for limited amounts of extracellular Neu5Ac, which is likely taken up in the beta-anomer. In addition, the rapid removal of sialic acid from solution might be advantageous to the bacterium to damp down host responses. Forms linear aceneuramate during interconversion of Neu5Ac anomers. The protein is N-acetylneuraminate epimerase (nanM) of Escherichia coli (strain K12).